We begin with the raw amino-acid sequence, 323 residues long: Acetyl esterase (323 aa).

The Involved in the stabilization of the negatively charged intermediate by the formation of the oxyanion hole signature appears at H91–G93. Active-site residues include S165, D262, and H292.

This sequence belongs to the 'GDXG' lipolytic enzyme family. Homodimer. Interacts with MalT and MelA.

Its subcellular location is the cytoplasm. Displays esterase activity towards short chain fatty esters (acyl chain length of up to 8 carbons). Able to hydrolyze triacetylglycerol (triacetin) and tributyrylglycerol (tributyrin), but not trioleylglycerol (triolein) or cholesterol oleate. Negatively regulates MalT activity by antagonizing maltotriose binding. Inhibits MelA galactosidase activity. In Salmonella dublin (strain CT_02021853), this protein is Acetyl esterase.